The primary structure comprises 170 residues: Neurotensin/neuromedin N (170 aa).

The N-terminal stretch at 1–23 (MMAGMKIQLVCMLLLAFSSWSLC) is a signal peptide. Q151 is subject to Pyrrolidone carboxylic acid.

It belongs to the neurotensin family. Interacts with NTSR1. Interacts with SORT1. Interacts with SORL1. In terms of processing, neurotensin is cleaved and degraded by Angiotensin-converting enzyme (ACE) and neprilysin (MME).

The protein resides in the secreted. It is found in the cytoplasmic vesicle. Its subcellular location is the secretory vesicle. In terms of biological role, neurotensin may play an endocrine or paracrine role in the regulation of fat metabolism. It causes contraction of smooth muscle. The polypeptide is Neurotensin/neuromedin N (NTS) (Homo sapiens (Human)).